Reading from the N-terminus, the 350-residue chain is Zona pellucida-binding protein 1 (350 aa).

The N-terminal stretch at 1-38 (MEASAPDRARRGWRRARAAASPLSRAAVVLLLSALVLR) is a signal peptide. N-linked (GlcNAc...) asparagine glycosylation is found at Asn113, Asn186, and Asn339.

This sequence belongs to the zona pellucida-binding protein Sp38 family. In terms of processing, N-glycosylated. As to expression, expressed in testis. Detected in sperm cells.

It localises to the cytoplasmic vesicle. Its subcellular location is the secretory vesicle. The protein resides in the acrosome. It is found in the secreted. The protein localises to the acrosome membrane. Functionally, plays a role in acrosome compaction and sperm morphogenesis. Is implicated in sperm-oocyte interaction during fertilization. This is Zona pellucida-binding protein 1 (ZPBP) from Sus scrofa (Pig).